A 240-amino-acid polypeptide reads, in one-letter code: 4-hydroxy-tetrahydrodipicolinate reductase (240 aa).

Residue G7–M12 participates in NAD(+) binding. Residue K35 participates in NADP(+) binding. NAD(+)-binding positions include G74–T76 and A98–M101. H131 (proton donor/acceptor) is an active-site residue. H132 provides a ligand contact to (S)-2,3,4,5-tetrahydrodipicolinate. K135 (proton donor) is an active-site residue. (S)-2,3,4,5-tetrahydrodipicolinate is bound at residue G141 to S142.

Belongs to the DapB family.

The protein localises to the cytoplasm. The enzyme catalyses (S)-2,3,4,5-tetrahydrodipicolinate + NAD(+) + H2O = (2S,4S)-4-hydroxy-2,3,4,5-tetrahydrodipicolinate + NADH + H(+). The catalysed reaction is (S)-2,3,4,5-tetrahydrodipicolinate + NADP(+) + H2O = (2S,4S)-4-hydroxy-2,3,4,5-tetrahydrodipicolinate + NADPH + H(+). It functions in the pathway amino-acid biosynthesis; L-lysine biosynthesis via DAP pathway; (S)-tetrahydrodipicolinate from L-aspartate: step 4/4. Functionally, catalyzes the conversion of 4-hydroxy-tetrahydrodipicolinate (HTPA) to tetrahydrodipicolinate. The protein is 4-hydroxy-tetrahydrodipicolinate reductase of Alkaliphilus metalliredigens (strain QYMF).